The primary structure comprises 726 residues: Methionine--tRNA ligase (726 aa).

A 'HIGH' region motif is present at residues 12 to 22 (PYVNNIPHLGN). Zn(2+) is bound by residues Cys-143, Cys-146, Cys-155, and Cys-158. Residues 330-334 (KFSKS) carry the 'KMSKS' region motif. Residue Lys-333 coordinates ATP. Residues 562 to 667 (FSEQICLKTV…DNPIPGERVI (106 aa)) enclose the tRNA-binding domain.

The protein belongs to the class-I aminoacyl-tRNA synthetase family. MetG type 1 subfamily. In terms of assembly, homodimer. It depends on Zn(2+) as a cofactor.

The protein resides in the cytoplasm. The enzyme catalyses tRNA(Met) + L-methionine + ATP = L-methionyl-tRNA(Met) + AMP + diphosphate. In terms of biological role, is required not only for elongation of protein synthesis but also for the initiation of all mRNA translation through initiator tRNA(fMet) aminoacylation. The polypeptide is Methionine--tRNA ligase (Borrelia recurrentis (strain A1)).